Here is a 137-residue protein sequence, read N- to C-terminus: MSEALKILNNIRTLRAQARECTLETLEEMLEKLEVVVNERREEESAAAAEVEERTRKLQQYREMLIADGIDPNELLNSLAAVKSGTKAKRAQRPAKYSYVDENGETKTWTGQGRTPAVIKKAMDEQGKSLDDFLIKQ.

A DNA-binding region spans residues 112–117 (QGRTPA).

Belongs to the histone-like protein H-NS family. Homodimer that oligomerizes on DNA into higher-order complexes that form bridges between disparate regions of DNA compacting it. Interacts with Hha, Cnu and StpA.

It localises to the cytoplasm. Its subcellular location is the nucleoid. Its function is as follows. A DNA-binding protein implicated in transcriptional repression and chromosome organization and compaction. Binds nucleation sites in AT-rich DNA and bridges them, forming higher-order nucleoprotein complexes and condensing the chromosome. As many horizontally transferred genes are AT-rich, it plays a central role in silencing foreign genes. A subset of genes are repressed by H-NS in association with other proteins. This is DNA-binding protein H-NS (hns) from Escherichia coli O6:H1 (strain CFT073 / ATCC 700928 / UPEC).